We begin with the raw amino-acid sequence, 153 residues long: Lipoprotein signal peptidase (153 aa).

2 helical membrane-spanning segments follow: residues 61 to 81 (YFFV…LVKN) and 85 to 105 (SLWL…NFID). Active-site residues include aspartate 114 and aspartate 130. A helical transmembrane segment spans residues 125-145 (IFNVADSYLTVGVLLLILILW).

The protein belongs to the peptidase A8 family.

The protein resides in the cell membrane. It catalyses the reaction Release of signal peptides from bacterial membrane prolipoproteins. Hydrolyzes -Xaa-Yaa-Zaa-|-(S,diacylglyceryl)Cys-, in which Xaa is hydrophobic (preferably Leu), and Yaa (Ala or Ser) and Zaa (Gly or Ala) have small, neutral side chains.. The protein operates within protein modification; lipoprotein biosynthesis (signal peptide cleavage). In terms of biological role, this protein specifically catalyzes the removal of signal peptides from prolipoproteins. The protein is Lipoprotein signal peptidase of Streptococcus thermophilus (strain CNRZ 1066).